The primary structure comprises 453 residues: tRNA-2-methylthio-N(6)-dimethylallyladenosine synthase (453 aa).

Residues glycine 17–glutamine 135 form the MTTase N-terminal domain. Cysteine 26, cysteine 62, cysteine 96, cysteine 172, cysteine 176, and cysteine 179 together coordinate [4Fe-4S] cluster. The 231-residue stretch at arginine 158–lysine 388 folds into the Radical SAM core domain. Positions lysine 391–valine 453 constitute a TRAM domain.

This sequence belongs to the methylthiotransferase family. MiaB subfamily. Monomer. Requires [4Fe-4S] cluster as cofactor.

The protein resides in the cytoplasm. It carries out the reaction N(6)-dimethylallyladenosine(37) in tRNA + (sulfur carrier)-SH + AH2 + 2 S-adenosyl-L-methionine = 2-methylsulfanyl-N(6)-dimethylallyladenosine(37) in tRNA + (sulfur carrier)-H + 5'-deoxyadenosine + L-methionine + A + S-adenosyl-L-homocysteine + 2 H(+). Functionally, catalyzes the methylthiolation of N6-(dimethylallyl)adenosine (i(6)A), leading to the formation of 2-methylthio-N6-(dimethylallyl)adenosine (ms(2)i(6)A) at position 37 in tRNAs that read codons beginning with uridine. This chain is tRNA-2-methylthio-N(6)-dimethylallyladenosine synthase, found in Clostridium tetani (strain Massachusetts / E88).